The primary structure comprises 759 residues: Secretin XpsD (759 aa).

A signal peptide spans 1 to 21 (MSERMTPRLFPVSLLIGLLAG). Residue Cys22 is the site of N-palmitoyl cysteine attachment. A lipid anchor (S-diacylglycerol cysteine) is attached at Cys22. Over residues 40 to 51 (VGAAGATQTTAE) the composition is skewed to low complexity. Positions 40–69 (VGAAGATQTTAEQRADGNASAKPTPVIRRG) are disordered. An N0 region spans residues 92–187 (GSATFNFEGE…APSTASPSAA (96 aa)). An N1 region spans residues 189-253 (GFEVRVVPLK…VQIFDVDWLS (65 aa)). Residues 254–323 (GMSVGVFPIQ…IQQWLDRIDS (70 aa)) are N2. The segment at 326–474 (GGVRLFSYEL…SIRDVIEKLD (149 aa)) is N3. The interval 352-434 (GGRGNGGNSG…PPSTNQNGSV (83 aa)) is disordered. The segment covering 392 to 401 (ATGGDIGGTS) has biased composition (gly residues). Residues 425 to 434 (PPSTNQNGSV) show a composition bias toward polar residues. Residues 479 to 734 (QVHIEAQIAE…VLITPSIVRN (256 aa)) are secretin. The s domain stretch occupies residues 736 to 759 (QDARDLTDEYGSKFKSMRPMDVHK).

Belongs to the bacterial secretin family. GSP D subfamily. In terms of assembly, forms a cylindrical channel with 15 subunits. Binds to XpsN.

Its subcellular location is the cell outer membrane. Its function is as follows. Involved in a type II secretion system (T2SS, formerly general secretion pathway, GSP) for the export of proteins. This subunit forms the outer membrane channel. This is Secretin XpsD (xpsD) from Xanthomonas campestris pv. campestris (strain ATCC 33913 / DSM 3586 / NCPPB 528 / LMG 568 / P 25).